The following is a 527-amino-acid chain: Phosphoethanolamine transferase OpgE (527 aa).

Topologically, residues Met1–Gly33 are periplasmic. Residues Leu34–Trp54 form a helical membrane-spanning segment. Topologically, residues Arg55–Lys62 are cytoplasmic. A helical membrane pass occupies residues Val63–Gly83. Residues Ala84 to Thr106 lie on the Periplasmic side of the membrane. A helical membrane pass occupies residues Ile107–Ile127. Residues Arg128–Leu146 lie on the Cytoplasmic side of the membrane. The chain crosses the membrane as a helical span at residues Val147–Phe167. Over Lys168 to Pro527 the chain is Periplasmic.

Belongs to the phosphoethanolamine transferase family.

It is found in the cell inner membrane. The protein operates within glycan metabolism; osmoregulated periplasmic glucan (OPG) biosynthesis. Its function is as follows. Catalyzes the addition of a phosphoethanolamine moiety to the osmoregulated periplasmic glucan (OPG) backbone. The polypeptide is Phosphoethanolamine transferase OpgE (opgE) (Escherichia coli (strain K12)).